The sequence spans 369 residues: Mitogen-activated protein kinase 11 (369 aa).

Positions 40-326 constitute a Protein kinase domain; the sequence is VPPLRPIGRG…VDEALCHPYL (287 aa). ATP-binding positions include 46 to 54 and Lys-69; that span reads IGRGASGIV. The Proton acceptor role is filled by Asp-166. Thr-198 carries the post-translational modification Phosphothreonine. A TXY motif is present at residues 198–200; it reads TEY. Residue Tyr-200 is modified to Phosphotyrosine. At Thr-203 the chain carries Phosphothreonine.

This sequence belongs to the protein kinase superfamily. CMGC Ser/Thr protein kinase family. MAP kinase subfamily. As to quaternary structure, interacts with MKK1, MKK2 and MKK6. Post-translationally, dually phosphorylated on Thr-198 and Tyr-200, which activates the enzyme.

It carries out the reaction L-seryl-[protein] + ATP = O-phospho-L-seryl-[protein] + ADP + H(+). The catalysed reaction is L-threonyl-[protein] + ATP = O-phospho-L-threonyl-[protein] + ADP + H(+). With respect to regulation, activated by threonine and tyrosine phosphorylation. The chain is Mitogen-activated protein kinase 11 (MPK11) from Arabidopsis thaliana (Mouse-ear cress).